Consider the following 185-residue polypeptide: TATA-box-binding protein (185 aa).

Repeat copies occupy residues 8–84 (IENI…VEML) and 99–175 (IQNM…LHEL).

Belongs to the TBP family.

In terms of biological role, general factor that plays a role in the activation of archaeal genes transcribed by RNA polymerase. Binds specifically to the TATA box promoter element which lies close to the position of transcription initiation. The sequence is that of TATA-box-binding protein from Thermococcus sibiricus (strain DSM 12597 / MM 739).